The sequence spans 79 residues: Acyl carrier protein (79 aa).

Residues 2-77 (SSIEDRVKKI…QAVDYIKKHL (76 aa)) enclose the Carrier domain. An O-(pantetheine 4'-phosphoryl)serine modification is found at S37.

The protein belongs to the acyl carrier protein (ACP) family. 4'-phosphopantetheine is transferred from CoA to a specific serine of apo-ACP by AcpS. This modification is essential for activity because fatty acids are bound in thioester linkage to the sulfhydryl of the prosthetic group.

The protein resides in the cytoplasm. It participates in lipid metabolism; fatty acid biosynthesis. Carrier of the growing fatty acid chain in fatty acid biosynthesis. This is Acyl carrier protein from Halorhodospira halophila (strain DSM 244 / SL1) (Ectothiorhodospira halophila (strain DSM 244 / SL1)).